A 201-amino-acid polypeptide reads, in one-letter code: Small ribosomal subunit protein uS4 (201 aa).

The S4 RNA-binding domain maps to 91 to 151 (SRLDNVVYRA…EKSQKMNWFE (61 aa)).

This sequence belongs to the universal ribosomal protein uS4 family. In terms of assembly, part of the 30S ribosomal subunit. Contacts protein S5. The interaction surface between S4 and S5 is involved in control of translational fidelity.

In terms of biological role, one of the primary rRNA binding proteins, it binds directly to 16S rRNA where it nucleates assembly of the body of the 30S subunit. Its function is as follows. With S5 and S12 plays an important role in translational accuracy. The protein is Small ribosomal subunit protein uS4 of Corynebacterium glutamicum (strain R).